The primary structure comprises 266 residues: Small ribosomal subunit protein uS2 (266 aa).

The protein belongs to the universal ribosomal protein uS2 family.

The protein is Small ribosomal subunit protein uS2 of Bartonella tribocorum (strain CIP 105476 / IBS 506).